The following is a 1601-amino-acid chain: Rap guanine nucleotide exchange factor 6 (1601 aa).

M1 carries the post-translational modification N-acetylmethionine. Disordered stretches follow at residues 1–22 (MNSPVDPGARQALRKKPPERTP) and 179–250 (PHPQ…QGRD). Residue S3 is modified to Phosphoserine. Over residues 187–205 (SSSQSGCSIASDSGSSSLS) the composition is skewed to low complexity. Positions 228–241 (VDSEDDEEEDEEID) are enriched in acidic residues. An a nucleoside 3',5'-cyclic phosphate-binding site is contributed by 280–399 (AFANMTMSVR…VEEEGEIVMV (120 aa)). An N-terminal Ras-GEF domain is found at 412–526 (KGHIVIKATP…LLNIACAAKA (115 aa)). The PDZ domain maps to 530–615 (QVVLQKASRE…LTVKTNIFVF (86 aa)). One can recognise a Ras-associating domain in the interval 749–835 (PDQVIRVFKV…GRYYLKNNME (87 aa)). The 229-residue stretch at 860 to 1088 (STIEVATQLS…LDVQGGAHKK (229 aa)) folds into the Ras-GEF domain. Disordered stretches follow at residues 1192–1274 (IRKK…SRSS), 1302–1324 (ESTGALEKTEHASGIGDHSQHGP), 1455–1478 (LESTPAESSEGLDPKDATDPVYKT), and 1571–1601 (QRHNLQPFHPKLGDVTDADSEADENEQVSAV). Composition is skewed to low complexity over residues 1229–1238 (SVASSLHSSP) and 1255–1274 (SAKSDNLSDSSHSEISSRSS). The span at 1586–1601 (TDADSEADENEQVSAV) shows a compositional bias: acidic residues.

Interacts with the second PDZ domain of human PTP1e. As to expression, isoform 3 has highest expression levels in the brain, heart, liver, lung and placenta and is barely detectable in skeletal muscle, kidney and pancreas.

Its subcellular location is the cytoplasm. The protein resides in the cell membrane. Its function is as follows. Guanine nucleotide exchange factor (GEF) for Rap1A, Rap2A and M-Ras GTPases. Does not interact with cAMP. In Homo sapiens (Human), this protein is Rap guanine nucleotide exchange factor 6 (RAPGEF6).